Consider the following 424-residue polypeptide: 3-ketoacyl-CoA thiolase B, peroxisomal (424 aa).

The transit peptide at 1–26 (MHRLQVVLGHLAGRSESSSALQAAPC) directs the protein to the peroxisome. Residues 1–26 (MHRLQVVLGHLAGRSESSSALQAAPC) form a PTS2-type peroxisomal targeting signal region. The active-site Acyl-thioester intermediate is the Cys-123. Lys-173 and Lys-234 each carry N6-acetyllysine. CoA-binding residues include Arg-249, Thr-252, and Ser-276. Cys-408 acts as the Proton donor/acceptor in catalysis.

The protein belongs to the thiolase-like superfamily. Thiolase family. Homodimer. Interacts (via PTS2-type peroxisomal targeting signal region) with PEX7; leading to its translocation into peroxisomes.

The protein resides in the peroxisome. The enzyme catalyses an acyl-CoA + acetyl-CoA = a 3-oxoacyl-CoA + CoA. The catalysed reaction is 2 acetyl-CoA = acetoacetyl-CoA + CoA. It carries out the reaction hexanoyl-CoA + acetyl-CoA = 3-oxooctanoyl-CoA + CoA. It catalyses the reaction tetradecanoyl-CoA + acetyl-CoA = 3-oxohexadecanoyl-CoA + CoA. The enzyme catalyses 3-oxohexadecanedioyl-CoA + CoA = tetradecanedioyl-CoA + acetyl-CoA. The catalysed reaction is 3-oxo-(6Z,9Z,12Z,15Z,18Z,21Z)-tetracosahexaenoyl-CoA + CoA = (4Z,7Z,10Z,13Z,16Z,19Z)-docosahexaenoyl-CoA + acetyl-CoA. It participates in lipid metabolism; peroxisomal fatty acid beta-oxidation. Responsible for the thiolytic cleavage of straight chain 3-keto fatty acyl-CoAs (3-oxoacyl-CoAs). Plays an important role in fatty acid peroxisomal beta-oxidation. Catalyzes the cleavage of short, medium, long, and very long straight chain 3-oxoacyl-CoAs. Medium chain straight 3-oxoacyl-CoAs are preferred substrates. This Rattus norvegicus (Rat) protein is 3-ketoacyl-CoA thiolase B, peroxisomal.